The primary structure comprises 478 residues: Lysine histidine transporter-like 7 (478 aa).

Over 1 to 63 (MSIALGNLFD…ITESRKGNVY (63 aa)) the chain is Cytoplasmic. Positions 15-45 (ESGGSPLFMSPAPSTDPQPISGEKNGGDGGR) are disordered. Residues 64-86 (TATFHLLCSGIGLQVILLPAAFA) traverse the membrane as a helical segment. Topologically, residues 87–89 (ALG) are extracellular. A helical transmembrane segment spans residues 90–112 (WVWGTIILTVGFVWKLYTTWLLV). The Cytoplasmic segment spans residues 113-140 (QLHEAVPGIRISRYVRLAIASFGVKLGK). Residues 141 to 161 (LLGIFPVMYLSGGACTILVIT) traverse the membrane as a helical segment. Residues 162-177 (GGKSIQQLLQIMSDDN) are Extracellular-facing. The chain crosses the membrane as a helical span at residues 178-198 (TAPLTSVQCFLVFSCIAMIMS). Over 199–205 (QFPNLNS) the chain is Cytoplasmic. Residues 206-226 (LFGVSLIGAFMGIAYCTVIWI) form a helical membrane-spanning segment. The Extracellular portion of the chain corresponds to 227–241 (LPVASDSQRTQVSVS). Residues 242–262 (YATMDKSFVHIFNAIGLIALV) form a helical membrane-spanning segment. Residues 263 to 291 (YRGNNLVLEIQGTLPSDSKNPSCKTMWRA) are Cytoplasmic-facing. The helical transmembrane segment at 292–312 (VMISHALVAICMFPLTFAVYW) threads the bilayer. Over 313–340 (AYGDKIPATGGPVGNYLKLYTQEHSKRA) the chain is Extracellular. The chain crosses the membrane as a helical span at residues 341–361 (ACFIHLTFIFSCLCSYPINLM). The Cytoplasmic segment spans residues 362–379 (PACDNIEMVYITKKKKPA). A helical transmembrane segment spans residues 380–402 (SIIVRMMLRVFLSLVCFTIAVGF). At 403–406 (PFLP) the chain is on the extracellular side. The chain crosses the membrane as a helical span at residues 407–429 (YLAVLIGAIALLVTFTYPCFMWI). At 430–439 (SIKKPQRKSP) the chain is on the cytoplasmic side. Residues 440-460 (MWLFNVLVGCLGASLSVLLLV) traverse the membrane as a helical segment. At 461–478 (ASAMRLAQKGLHANFFRP) the chain is on the extracellular side.

Belongs to the amino acid/polyamine transporter 2 family. Amino acid/auxin permease (AAAP) (TC 2.A.18.2) subfamily.

It is found in the cell membrane. Amino acid transporter. The polypeptide is Lysine histidine transporter-like 7 (Arabidopsis thaliana (Mouse-ear cress)).